Here is a 506-residue protein sequence, read N- to C-terminus: Maturase K (506 aa).

It belongs to the intron maturase 2 family. MatK subfamily.

The protein resides in the plastid. It is found in the chloroplast. Its function is as follows. Usually encoded in the trnK tRNA gene intron. Probably assists in splicing its own and other chloroplast group II introns. This is Maturase K from Uncarina grandidieri (Mouse trap tree).